Here is a 143-residue protein sequence, read N- to C-terminus: MRRVYTNRRAHHEYELLERFEAGISLTGSEVKSVRAGGVDFRDAFARINGSDVDLEGLYIPVYKEATYNNHEPRRKRRLLLHREEIEKLRRGLEQKGLTLVPTRLYQKGRYFKVELALARGKKLHDKRRADAERTVARELREL.

It belongs to the SmpB family.

The protein resides in the cytoplasm. Its function is as follows. Required for rescue of stalled ribosomes mediated by trans-translation. Binds to transfer-messenger RNA (tmRNA), required for stable association of tmRNA with ribosomes. tmRNA and SmpB together mimic tRNA shape, replacing the anticodon stem-loop with SmpB. tmRNA is encoded by the ssrA gene; the 2 termini fold to resemble tRNA(Ala) and it encodes a 'tag peptide', a short internal open reading frame. During trans-translation Ala-aminoacylated tmRNA acts like a tRNA, entering the A-site of stalled ribosomes, displacing the stalled mRNA. The ribosome then switches to translate the ORF on the tmRNA; the nascent peptide is terminated with the 'tag peptide' encoded by the tmRNA and targeted for degradation. The ribosome is freed to recommence translation, which seems to be the essential function of trans-translation. The polypeptide is SsrA-binding protein (Deinococcus radiodurans (strain ATCC 13939 / DSM 20539 / JCM 16871 / CCUG 27074 / LMG 4051 / NBRC 15346 / NCIMB 9279 / VKM B-1422 / R1)).